Consider the following 91-residue polypeptide: Metalloproteinase inhibitor 2 (91 aa).

The NTR domain maps to 1-91; that stretch reads KAVSEKEVDS…FIVPWDTLST (91 aa).

The protein belongs to the protease inhibitor I35 (TIMP) family. In terms of processing, the activity of TIMP2 is dependent on the presence of disulfide bonds.

The protein resides in the secreted. Complexes with metalloproteinases (such as collagenases) and irreversibly inactivates them. This chain is Metalloproteinase inhibitor 2 (TIMP2), found in Equus caballus (Horse).